Reading from the N-terminus, the 505-residue chain is Phosphoglycerate kinase, glycosomal (505 aa).

Positions 29, 30, 31, 32, 45, 67, 68, 70, 71, 219, 220, 256, and 257 each coordinate (2R)-3-phosphoglycerate. ADP-binding residues include Gly302 and Ala303. A CDP-binding site is contributed by Gly302. AMP is bound by residues Ala303 and Lys304. Ala303 contacts ATP. Ala303 contacts Mg(2+). A (2R)-3-phosphoglycerate-binding site is contributed by Lys304. Asp307 serves as a coordination point for CDP. Asp307 is a Mg(2+) binding site. Residues Lys308 and Gly326 each coordinate ADP. AMP is bound at residue Lys308. Lys308 serves as a coordination point for ATP. Position 326 (Gly326) interacts with CDP. Residues Gly327 and Gly399 each coordinate AMP. ATP contacts are provided by Gly327 and Gly399. Positions 399 and 423 each coordinate ADP. CDP contacts are provided by Gly424, Leu426, and Phe429. ADP is bound by residues Phe429, Glu430, Asp462, and Thr463. Glu430 is an AMP binding site. ATP is bound by residues Glu430, Asp462, and Thr463. Asp462 provides a ligand contact to Mg(2+).

This sequence belongs to the phosphoglycerate kinase family. Monomer. The cofactor is Mg(2+).

Its subcellular location is the glycosome. It carries out the reaction (2R)-3-phosphoglycerate + ATP = (2R)-3-phospho-glyceroyl phosphate + ADP. The protein operates within carbohydrate degradation; glycolysis; pyruvate from D-glyceraldehyde 3-phosphate: step 2/5. This is Phosphoglycerate kinase, glycosomal (PGKA) from Crithidia fasciculata.